Reading from the N-terminus, the 259-residue chain is Adenosylcobinamide-GDP ribazoletransferase (259 aa).

Helical transmembrane passes span 36 to 56 (FSPL…ILLL), 65 to 85 (MPFI…VDGL), 108 to 128 (IGAS…AALF), 133 to 153 (LILF…IWAI), 175 to 195 (GFLI…FILI), 201 to 221 (IIST…ALII), and 238 to 258 (GASV…ILPA).

It belongs to the CobS family. The cofactor is Mg(2+).

It is found in the cell inner membrane. The catalysed reaction is alpha-ribazole + adenosylcob(III)inamide-GDP = adenosylcob(III)alamin + GMP + H(+). It catalyses the reaction alpha-ribazole 5'-phosphate + adenosylcob(III)inamide-GDP = adenosylcob(III)alamin 5'-phosphate + GMP + H(+). It functions in the pathway cofactor biosynthesis; adenosylcobalamin biosynthesis; adenosylcobalamin from cob(II)yrinate a,c-diamide: step 7/7. Functionally, joins adenosylcobinamide-GDP and alpha-ribazole to generate adenosylcobalamin (Ado-cobalamin). Also synthesizes adenosylcobalamin 5'-phosphate from adenosylcobinamide-GDP and alpha-ribazole 5'-phosphate. The polypeptide is Adenosylcobinamide-GDP ribazoletransferase (Prochlorococcus marinus (strain SARG / CCMP1375 / SS120)).